Reading from the N-terminus, the 412-residue chain is 1-deoxy-D-xylulose 5-phosphate reductoisomerase (412 aa).

NADPH is bound by residues threonine 10, glycine 11, serine 12, isoleucine 13, glycine 36, lysine 37, asparagine 38, and asparagine 130. Lysine 131 is a binding site for 1-deoxy-D-xylulose 5-phosphate. Glutamate 132 is a binding site for NADPH. Aspartate 156 contacts Mn(2+). Positions 157, 158, 194, and 217 each coordinate 1-deoxy-D-xylulose 5-phosphate. Glutamate 158 provides a ligand contact to Mn(2+). Glycine 223 provides a ligand contact to NADPH. 1-deoxy-D-xylulose 5-phosphate-binding residues include serine 230, asparagine 235, lysine 236, and glutamate 239. Residue glutamate 239 participates in Mn(2+) binding.

Belongs to the DXR family. The cofactor is Mg(2+). Requires Mn(2+) as cofactor.

It carries out the reaction 2-C-methyl-D-erythritol 4-phosphate + NADP(+) = 1-deoxy-D-xylulose 5-phosphate + NADPH + H(+). The protein operates within isoprenoid biosynthesis; isopentenyl diphosphate biosynthesis via DXP pathway; isopentenyl diphosphate from 1-deoxy-D-xylulose 5-phosphate: step 1/6. In terms of biological role, catalyzes the NADPH-dependent rearrangement and reduction of 1-deoxy-D-xylulose-5-phosphate (DXP) to 2-C-methyl-D-erythritol 4-phosphate (MEP). The sequence is that of 1-deoxy-D-xylulose 5-phosphate reductoisomerase from Prochlorococcus marinus (strain NATL1A).